The sequence spans 251 residues: Developmental protein SEPALLATA 1 (251 aa).

The MADS-box domain maps to 3–57 (RGRVELKRIENKINRQVTFAKRRNGLLKKAYELSVLCDAEVALIIFSNRGKLYEF). Positions 85–176 (AKELENSYRE…ALAMKLDDMI (92 aa)) form a coiled coil. The K-box domain maps to 88 to 178 (LENSYREYLK…AMKLDDMIGV (91 aa)).

Heterodimer with AGAMOUS capable of binding to CArG-box sequences. Interacts with AGL16. Interacts with TT16/AGL32. Expressed mainly in carpels, and weakly in stamens.

It is found in the nucleus. In terms of biological role, probable transcription factor. Functions with SEPALLATA2/AGL4 and SEPALLATA3/AGL9 to ensure proper development of petals, stamens and carpels, and to prevent the indeterminate growth of the flower meristem. Forms a heterodimer via the K-box domain with AGAMOUS, that could be involved in genes regulation during floral meristem development. This chain is Developmental protein SEPALLATA 1 (SEP1), found in Arabidopsis thaliana (Mouse-ear cress).